The following is a 261-amino-acid chain: Probable septum site-determining protein MinC (261 aa).

Residues 106-145 are disordered; it reads RAPAAKPADEAEPAAVPAVETAAAPAAAAAPEQPSEPAPT. Residues 118-144 show a composition bias toward low complexity; the sequence is PAAVPAVETAAAPAAAAAPEQPSEPAP.

It belongs to the MinC family. In terms of assembly, interacts with MinD and FtsZ.

Functionally, cell division inhibitor that blocks the formation of polar Z ring septums. Rapidly oscillates between the poles of the cell to destabilize FtsZ filaments that have formed before they mature into polar Z rings. Prevents FtsZ polymerization. This Burkholderia orbicola (strain AU 1054) protein is Probable septum site-determining protein MinC.